Here is a 286-residue protein sequence, read N- to C-terminus: ATP synthase gamma chain (286 aa).

The protein belongs to the ATPase gamma chain family. In terms of assembly, F-type ATPases have 2 components, CF(1) - the catalytic core - and CF(0) - the membrane proton channel. CF(1) has five subunits: alpha(3), beta(3), gamma(1), delta(1), epsilon(1). CF(0) has three main subunits: a, b and c.

The protein localises to the cell inner membrane. Functionally, produces ATP from ADP in the presence of a proton gradient across the membrane. The gamma chain is believed to be important in regulating ATPase activity and the flow of protons through the CF(0) complex. The protein is ATP synthase gamma chain of Pseudomonas putida (strain GB-1).